Here is a 338-residue protein sequence, read N- to C-terminus: Ketol-acid reductoisomerase (NADP(+)) (338 aa).

The KARI N-terminal Rossmann domain maps to Met1 to Thr181. NADP(+)-binding positions include Tyr24 to Gln27, Arg47, and Ser52. The active site involves His107. Gly133 serves as a coordination point for NADP(+). A KARI C-terminal knotted domain is found at Asn182–Ile327. Mg(2+)-binding residues include Asp190, Glu194, Glu226, and Glu230. Ser251 is a binding site for substrate.

The protein belongs to the ketol-acid reductoisomerase family. It depends on Mg(2+) as a cofactor.

The catalysed reaction is (2R)-2,3-dihydroxy-3-methylbutanoate + NADP(+) = (2S)-2-acetolactate + NADPH + H(+). It catalyses the reaction (2R,3R)-2,3-dihydroxy-3-methylpentanoate + NADP(+) = (S)-2-ethyl-2-hydroxy-3-oxobutanoate + NADPH + H(+). It functions in the pathway amino-acid biosynthesis; L-isoleucine biosynthesis; L-isoleucine from 2-oxobutanoate: step 2/4. The protein operates within amino-acid biosynthesis; L-valine biosynthesis; L-valine from pyruvate: step 2/4. Functionally, involved in the biosynthesis of branched-chain amino acids (BCAA). Catalyzes an alkyl-migration followed by a ketol-acid reduction of (S)-2-acetolactate (S2AL) to yield (R)-2,3-dihydroxy-isovalerate. In the isomerase reaction, S2AL is rearranged via a Mg-dependent methyl migration to produce 3-hydroxy-3-methyl-2-ketobutyrate (HMKB). In the reductase reaction, this 2-ketoacid undergoes a metal-dependent reduction by NADPH to yield (R)-2,3-dihydroxy-isovalerate. This Janthinobacterium sp. (strain Marseille) (Minibacterium massiliensis) protein is Ketol-acid reductoisomerase (NADP(+)).